Reading from the N-terminus, the 415-residue chain is Glutamyl-tRNA reductase (415 aa).

Residues 49-52 (TCNR), Ser104, 109-111 (EPQ), and Gln115 contribute to the substrate site. Cys50 functions as the Nucleophile in the catalytic mechanism. 184–189 (GAGEMI) is an NADP(+) binding site.

The protein belongs to the glutamyl-tRNA reductase family. In terms of assembly, homodimer.

It catalyses the reaction (S)-4-amino-5-oxopentanoate + tRNA(Glu) + NADP(+) = L-glutamyl-tRNA(Glu) + NADPH + H(+). It functions in the pathway porphyrin-containing compound metabolism; protoporphyrin-IX biosynthesis; 5-aminolevulinate from L-glutamyl-tRNA(Glu): step 1/2. In terms of biological role, catalyzes the NADPH-dependent reduction of glutamyl-tRNA(Glu) to glutamate 1-semialdehyde (GSA). This Neisseria gonorrhoeae (strain ATCC 700825 / FA 1090) protein is Glutamyl-tRNA reductase.